A 172-amino-acid chain; its full sequence is Small ribosomal subunit protein uS5 (172 aa).

Residues 17–80 form the S5 DRBM domain; it reads FTEKLIKLNR…ERAKRSMVLF (64 aa).

The protein belongs to the universal ribosomal protein uS5 family. Part of the 30S ribosomal subunit. Contacts proteins S4 and S8.

Its function is as follows. With S4 and S12 plays an important role in translational accuracy. Functionally, located at the back of the 30S subunit body where it stabilizes the conformation of the head with respect to the body. This Treponema pallidum (strain Nichols) protein is Small ribosomal subunit protein uS5.